Consider the following 281-residue polypeptide: Ethylene-inducing xylanase 1 (281 aa).

An N-terminal signal peptide occupies residues 1–19 (MVSYKAFLITLAAVTRVLT). Asparagine 23 carries N-linked (GlcNAc...) asparagine glycosylation. The 189-residue stretch at 32–220 (SGTPSSTGTS…SSGSSDITVG (189 aa)) folds into the GH11 domain. The active-site Nucleophile is the glutamate 116. Glutamate 207 serves as the catalytic Proton donor. Positions 246 to 281 (TCGALYSQCGGTGFTGSQCCASGTCKYANSYYSQCL) constitute a CBM1 domain.

It belongs to the glycosyl hydrolase 11 (cellulase G) family.

It carries out the reaction Endohydrolysis of (1-&gt;4)-beta-D-xylosidic linkages in xylans.. It participates in glycan degradation; xylan degradation. Its function is as follows. Endo-1,4-beta-xylanase involved in the hydrolysis of xylan, a major structural heterogeneous polysaccharide found in plant biomass representing the second most abundant polysaccharide in the biosphere, after cellulose. May act as an elicitor of plant defense responses in certain plants but does not exhibit any cell death when transiently expressed in N.benthamiana. In Botryotinia fuckeliana (strain B05.10) (Noble rot fungus), this protein is Ethylene-inducing xylanase 1.